The primary structure comprises 249 residues: Uridylate kinase (249 aa).

15 to 18 (KLSG) provides a ligand contact to ATP. The involved in allosteric activation by GTP stretch occupies residues 23–28 (GDEGFG). Gly-57 is a binding site for UMP. Gly-58 and Arg-62 together coordinate ATP. Residues Asp-77 and 138-145 (TGNPFFTT) each bind UMP. ATP contacts are provided by Thr-165, Tyr-171, and Asp-174.

Belongs to the UMP kinase family. In terms of assembly, homohexamer.

It localises to the cytoplasm. It catalyses the reaction UMP + ATP = UDP + ADP. It functions in the pathway pyrimidine metabolism; CTP biosynthesis via de novo pathway; UDP from UMP (UMPK route): step 1/1. Allosterically activated by GTP. Inhibited by UTP. Its function is as follows. Catalyzes the reversible phosphorylation of UMP to UDP. The chain is Uridylate kinase from Pseudoalteromonas translucida (strain TAC 125).